Consider the following 470-residue polypeptide: 3-isopropylmalate dehydratase large subunit (470 aa).

The [4Fe-4S] cluster site is built by C346, C406, and C409.

This sequence belongs to the aconitase/IPM isomerase family. LeuC type 1 subfamily. In terms of assembly, heterodimer of LeuC and LeuD. It depends on [4Fe-4S] cluster as a cofactor.

It catalyses the reaction (2R,3S)-3-isopropylmalate = (2S)-2-isopropylmalate. Its pathway is amino-acid biosynthesis; L-leucine biosynthesis; L-leucine from 3-methyl-2-oxobutanoate: step 2/4. Functionally, catalyzes the isomerization between 2-isopropylmalate and 3-isopropylmalate, via the formation of 2-isopropylmaleate. The sequence is that of 3-isopropylmalate dehydratase large subunit from Shouchella clausii (strain KSM-K16) (Alkalihalobacillus clausii).